Here is a 277-residue protein sequence, read N- to C-terminus: Putative phosphoenolpyruvate synthase regulatory protein (277 aa).

157 to 164 (GVSRSGKT) provides a ligand contact to ADP.

It belongs to the pyruvate, phosphate/water dikinase regulatory protein family. PSRP subfamily.

The catalysed reaction is [pyruvate, water dikinase] + ADP = [pyruvate, water dikinase]-phosphate + AMP + H(+). It catalyses the reaction [pyruvate, water dikinase]-phosphate + phosphate + H(+) = [pyruvate, water dikinase] + diphosphate. Functionally, bifunctional serine/threonine kinase and phosphorylase involved in the regulation of the phosphoenolpyruvate synthase (PEPS) by catalyzing its phosphorylation/dephosphorylation. This chain is Putative phosphoenolpyruvate synthase regulatory protein, found in Vibrio vulnificus (strain CMCP6).